Here is a 197-residue protein sequence, read N- to C-terminus: Elongation factor Ts (197 aa).

The tract at residues 81–84 is involved in Mg(2+) ion dislocation from EF-Tu; the sequence is TDFV.

It belongs to the EF-Ts family.

It is found in the cytoplasm. In terms of biological role, associates with the EF-Tu.GDP complex and induces the exchange of GDP to GTP. It remains bound to the aminoacyl-tRNA.EF-Tu.GTP complex up to the GTP hydrolysis stage on the ribosome. In Persephonella marina (strain DSM 14350 / EX-H1), this protein is Elongation factor Ts.